A 171-amino-acid chain; its full sequence is ATP synthase subunit b (171 aa).

Residues 13–33 (GVEWGTTFVTLVTFVILIILL) traverse the membrane as a helical segment.

This sequence belongs to the ATPase B chain family. As to quaternary structure, F-type ATPases have 2 components, F(1) - the catalytic core - and F(0) - the membrane proton channel. F(1) has five subunits: alpha(3), beta(3), gamma(1), delta(1), epsilon(1). F(0) has three main subunits: a(1), b(2) and c(10-14). The alpha and beta chains form an alternating ring which encloses part of the gamma chain. F(1) is attached to F(0) by a central stalk formed by the gamma and epsilon chains, while a peripheral stalk is formed by the delta and b chains.

Its subcellular location is the cell membrane. Its function is as follows. F(1)F(0) ATP synthase produces ATP from ADP in the presence of a proton or sodium gradient. F-type ATPases consist of two structural domains, F(1) containing the extramembraneous catalytic core and F(0) containing the membrane proton channel, linked together by a central stalk and a peripheral stalk. During catalysis, ATP synthesis in the catalytic domain of F(1) is coupled via a rotary mechanism of the central stalk subunits to proton translocation. Functionally, component of the F(0) channel, it forms part of the peripheral stalk, linking F(1) to F(0). The polypeptide is ATP synthase subunit b (Staphylococcus epidermidis (strain ATCC 12228 / FDA PCI 1200)).